The following is a 357-amino-acid chain: Putative lipopolysaccharide heptosyltransferase 4 (357 aa).

The catalysed reaction is alpha-D-Glc-(1-&gt;2)-alpha-D-Glc-(1-&gt;3)-[alpha-D-Gal-(1-&gt;6)]-alpha-D-Glc-(1-&gt;3)-[L-alpha-D-Hep-(1-&gt;7)]-4-O-PO3(2-)-L-alpha-D-Hep-(1-&gt;3)-4-O-PO3(2-)-L-alpha-D-Hep-(1-&gt;5)-[alpha-Kdo-(2-&gt;4)]-alpha-Kdo-(2-&gt;6)-lipid A + ADP-L-glycero-beta-D-manno-heptose = lipid A-core + ADP + H(+). It participates in bacterial outer membrane biogenesis; LPS core biosynthesis. In terms of biological role, transferase involved in the biosynthesis of the core oligosaccharide region of lipopolysaccharide (LPS). May catalyze the addition of the terminal heptose (heptose IV) to the outer-core glucose III, the last step of the lipid A-core oligosaccharide biosynthesis. In Escherichia coli (strain K12), this protein is Putative lipopolysaccharide heptosyltransferase 4.